Reading from the N-terminus, the 49-residue chain is Venom peptide 3 (49 aa).

Positions 1–23 (MRFTFVLVIAATVAVLGFFGINA) are cleaved as a signal peptide. 2 AXPX repeats span residues 23–26 (AEPM) and 31–34 (AEPY). A propeptide spanning residues 24 to 37 (EPMPDPHAEPYPDA) is cleaved from the precursor. Leu-48 is modified (leucine amide).

Expressed by the venom gland.

Its subcellular location is the secreted. This Eumenes pomiformis (Potter wasp) protein is Venom peptide 3.